Consider the following 137-residue polypeptide: uncharacterized protein (137 aa).

2 consecutive transmembrane segments (helical) span residues 36–52 (LAPP…PFVL) and 113–129 (FYGY…IFCF).

The protein localises to the membrane. This is an uncharacterized protein from Saccharomyces cerevisiae (strain ATCC 204508 / S288c) (Baker's yeast).